The chain runs to 795 residues: Phenylalanine--tRNA ligase beta subunit (795 aa).

The region spanning 39–148 is the tRNA-binding domain; sequence AGSFHGVVVG…ADAPIGTDIR (110 aa). In terms of domain architecture, B5 spans 401 to 476; it reads PKRATITLRR…RVYGYNNIPD (76 aa). D454, D460, E463, and E464 together coordinate Mg(2+). The FDX-ACB domain maps to 701 to 794; sequence SRFPANRRDI…LKERFQASLR (94 aa).

The protein belongs to the phenylalanyl-tRNA synthetase beta subunit family. Type 1 subfamily. Tetramer of two alpha and two beta subunits. It depends on Mg(2+) as a cofactor.

Its subcellular location is the cytoplasm. The catalysed reaction is tRNA(Phe) + L-phenylalanine + ATP = L-phenylalanyl-tRNA(Phe) + AMP + diphosphate + H(+). The sequence is that of Phenylalanine--tRNA ligase beta subunit from Shigella sonnei (strain Ss046).